Consider the following 227-residue polypeptide: MIMKTYFSGVSTLGVHSLATEDYGFFPLSVDQKTMERMKNVLDIPATQLNISNSSLIGSLCVGNSNGLLVPDITTEKEVELIKMFLKENSLDVNLERLKAKNTAFGNLILTNNKGCIISEELSRFRKTIEDVLDVESGVGNYAELPTVGSNGVATDKGCLVHPLTDELELEWIQDILRVDYVERGTANRGVTSVGACILANIKGAVVGGDTSGPEILKIEEALDLID.

Belongs to the eIF-6 family.

Binds to the 50S ribosomal subunit and prevents its association with the 30S ribosomal subunit to form the 70S initiation complex. This is Translation initiation factor 6 from Methanococcus maripaludis (strain C5 / ATCC BAA-1333).